Here is a 183-residue protein sequence, read N- to C-terminus: ATP synthase subunit delta (183 aa).

Belongs to the ATPase delta chain family. As to quaternary structure, F-type ATPases have 2 components, F(1) - the catalytic core - and F(0) - the membrane proton channel. F(1) has five subunits: alpha(3), beta(3), gamma(1), delta(1), epsilon(1). CF(0) has four main subunits: a(1), b(1), b'(1) and c(10-14). The alpha and beta chains form an alternating ring which encloses part of the gamma chain. F(1) is attached to F(0) by a central stalk formed by the gamma and epsilon chains, while a peripheral stalk is formed by the delta, b and b' chains.

The protein localises to the cellular thylakoid membrane. Functionally, f(1)F(0) ATP synthase produces ATP from ADP in the presence of a proton or sodium gradient. F-type ATPases consist of two structural domains, F(1) containing the extramembraneous catalytic core and F(0) containing the membrane proton channel, linked together by a central stalk and a peripheral stalk. During catalysis, ATP synthesis in the catalytic domain of F(1) is coupled via a rotary mechanism of the central stalk subunits to proton translocation. In terms of biological role, this protein is part of the stalk that links CF(0) to CF(1). It either transmits conformational changes from CF(0) to CF(1) or is implicated in proton conduction. The chain is ATP synthase subunit delta from Nostoc sp. (strain PCC 7120 / SAG 25.82 / UTEX 2576).